The following is a 500-amino-acid chain: L-arabinose isomerase (500 aa).

The Mn(2+) site is built by glutamate 306, glutamate 333, histidine 349, and histidine 448.

Belongs to the arabinose isomerase family. Requires Mn(2+) as cofactor.

The enzyme catalyses beta-L-arabinopyranose = L-ribulose. The protein operates within carbohydrate degradation; L-arabinose degradation via L-ribulose; D-xylulose 5-phosphate from L-arabinose (bacterial route): step 1/3. In terms of biological role, catalyzes the conversion of L-arabinose to L-ribulose. This Cellvibrio japonicus (strain Ueda107) (Pseudomonas fluorescens subsp. cellulosa) protein is L-arabinose isomerase.